The sequence spans 76 residues: Large ribosomal subunit protein eL20 (76 aa).

This sequence belongs to the eukaryotic ribosomal protein eL20 family. As to quaternary structure, part of the 50S ribosomal subunit. Binds 23S rRNA.

This is Large ribosomal subunit protein eL20 from Methanococcus maripaludis (strain C5 / ATCC BAA-1333).